The following is a 313-amino-acid chain: Formimidoylglutamase (313 aa).

H130, D155, H157, D159, D241, and D243 together coordinate Mn(2+).

It belongs to the arginase family. Mn(2+) serves as cofactor.

It carries out the reaction N-formimidoyl-L-glutamate + H2O = formamide + L-glutamate. The protein operates within amino-acid degradation; L-histidine degradation into L-glutamate; L-glutamate from N-formimidoyl-L-glutamate (hydrolase route): step 1/1. Its function is as follows. Catalyzes the conversion of N-formimidoyl-L-glutamate to L-glutamate and formamide. The chain is Formimidoylglutamase from Salmonella typhi.